The chain runs to 305 residues: Ribosomal RNA small subunit methyltransferase H (305 aa).

Residues 37–39 (GGH), aspartate 57, phenylalanine 85, aspartate 101, and histidine 108 contribute to the S-adenosyl-L-methionine site.

It belongs to the methyltransferase superfamily. RsmH family.

The protein resides in the cytoplasm. The catalysed reaction is cytidine(1402) in 16S rRNA + S-adenosyl-L-methionine = N(4)-methylcytidine(1402) in 16S rRNA + S-adenosyl-L-homocysteine + H(+). Its function is as follows. Specifically methylates the N4 position of cytidine in position 1402 (C1402) of 16S rRNA. This is Ribosomal RNA small subunit methyltransferase H from Parabacteroides distasonis (strain ATCC 8503 / DSM 20701 / CIP 104284 / JCM 5825 / NCTC 11152).